Reading from the N-terminus, the 594-residue chain is Actin-histidine N-methyltransferase (594 aa).

The interval M1–P22 is disordered. Positions Q10–V20 are enriched in polar residues. S-adenosyl-L-methionine contacts are provided by residues R75, E104–F106, R254, D275–H279, and S325–F327. Residues E94–G314 enclose the SET domain. Position 513 is a phosphoserine (S513). Residues E549–E594 are disordered. Residues G555–Q572 are compositionally biased toward polar residues. Residues E573 to K582 are compositionally biased toward basic and acidic residues. Polar residues predominate over residues G583–E594.

Belongs to the class V-like SAM-binding methyltransferase superfamily. SETD3 actin-histidine methyltransferase family. As to quaternary structure, interacts with MYOD1. Phosphorylated by GSK3B, which is required for recognition by the SCF(FBXW7) complex and subsequent degradation. In terms of processing, ubiquitinated by the SCF(FBXW7) complex following phosphorylation by GSK3B, leading to its degradation by the proteasome.

Its subcellular location is the cytoplasm. The protein localises to the nucleus. It carries out the reaction L-histidyl-[protein] + S-adenosyl-L-methionine = N(tele)-methyl-L-histidyl-[protein] + S-adenosyl-L-homocysteine + H(+). Its function is as follows. Protein-histidine N-methyltransferase that specifically mediates 3-methylhistidine (tele-methylhistidine) methylation of actin at 'His-73'. Histidine methylation of actin is required for smooth muscle contraction of the laboring uterus during delivery. Does not have protein-lysine N-methyltransferase activity and probably only catalyzes histidine methylation of actin. The protein is Actin-histidine N-methyltransferase of Homo sapiens (Human).